The chain runs to 262 residues: Probable proteasome subunit beta type-7 (262 aa).

This sequence belongs to the peptidase T1B family. In terms of assembly, the 26S proteasome consists of a 20S proteasome core and two 19S regulatory subunits. The 20S proteasome core is composed of 28 subunits that are arranged in four stacked rings, resulting in a barrel-shaped structure. The two end rings are each formed by seven alpha subunits, and the two central rings are each formed by seven beta subunits. The catalytic chamber with the active sites is on the inside of the barrel.

Its subcellular location is the cytoplasm. The protein localises to the nucleus. Non-catalytic component of the proteasome, a multicatalytic proteinase complex which is characterized by its ability to cleave peptides with Arg, Phe, Tyr, Leu, and Glu adjacent to the leaving group at neutral or slightly basic pH. The proteasome has an ATP-dependent proteolytic activity. The protein is Probable proteasome subunit beta type-7 of Schizosaccharomyces pombe (strain 972 / ATCC 24843) (Fission yeast).